An 85-amino-acid polypeptide reads, in one-letter code: Putative membrane protein insertion efficiency factor (85 aa).

This sequence belongs to the UPF0161 family.

The protein resides in the cell membrane. Could be involved in insertion of integral membrane proteins into the membrane. In terms of biological role, lyses fish blood cells. This chain is Putative membrane protein insertion efficiency factor (hlyA), found in Aeromonas hydrophila.